The chain runs to 88 residues: Co-chaperonin GroES (88 aa).

This sequence belongs to the GroES chaperonin family. As to quaternary structure, heptamer of 7 subunits arranged in a ring. Interacts with the chaperonin GroEL.

It localises to the cytoplasm. Functionally, together with the chaperonin GroEL, plays an essential role in assisting protein folding. The GroEL-GroES system forms a nano-cage that allows encapsulation of the non-native substrate proteins and provides a physical environment optimized to promote and accelerate protein folding. GroES binds to the apical surface of the GroEL ring, thereby capping the opening of the GroEL channel. This is Co-chaperonin GroES from Rubrobacter xylanophilus (strain DSM 9941 / JCM 11954 / NBRC 16129 / PRD-1).